The chain runs to 475 residues: Ribulose bisphosphate carboxylase large chain (475 aa).

The propeptide occupies 1–2 (MS). Pro3 carries the N-acetylproline modification. Lys14 bears the N6,N6,N6-trimethyllysine mark. The substrate site is built by Asn123 and Thr173. Residue Lys175 is the Proton acceptor of the active site. Substrate is bound at residue Lys177. Residues Lys201, Asp203, and Glu204 each contribute to the Mg(2+) site. Lys201 is modified (N6-carboxylysine). The Proton acceptor role is filled by His294. Residues Arg295, His327, and Ser379 each coordinate substrate.

Belongs to the RuBisCO large chain family. Type I subfamily. Heterohexadecamer of 8 large chains and 8 small chains; disulfide-linked. The disulfide link is formed within the large subunit homodimers. Mg(2+) is required as a cofactor. Post-translationally, the disulfide bond which can form in the large chain dimeric partners within the hexadecamer appears to be associated with oxidative stress and protein turnover.

Its subcellular location is the plastid. The protein localises to the chloroplast. The catalysed reaction is 2 (2R)-3-phosphoglycerate + 2 H(+) = D-ribulose 1,5-bisphosphate + CO2 + H2O. It catalyses the reaction D-ribulose 1,5-bisphosphate + O2 = 2-phosphoglycolate + (2R)-3-phosphoglycerate + 2 H(+). Functionally, ruBisCO catalyzes two reactions: the carboxylation of D-ribulose 1,5-bisphosphate, the primary event in carbon dioxide fixation, as well as the oxidative fragmentation of the pentose substrate in the photorespiration process. Both reactions occur simultaneously and in competition at the same active site. The protein is Ribulose bisphosphate carboxylase large chain of Pinus radiata (Monterey pine).